Here is a 66-residue protein sequence, read N- to C-terminus: UPF0337 protein RPA4217 (66 aa).

This sequence belongs to the UPF0337 (CsbD) family.

The polypeptide is UPF0337 protein RPA4217 (Rhodopseudomonas palustris (strain ATCC BAA-98 / CGA009)).